We begin with the raw amino-acid sequence, 616 residues long: Chaperone protein HscA (616 aa).

This sequence belongs to the heat shock protein 70 family.

Chaperone involved in the maturation of iron-sulfur cluster-containing proteins. Has a low intrinsic ATPase activity which is markedly stimulated by HscB. Involved in the maturation of IscU. The sequence is that of Chaperone protein HscA from Enterobacter sp. (strain 638).